We begin with the raw amino-acid sequence, 156 residues long: ATP synthase subunit b (156 aa).

Residues 3 to 23 (ITLTIFAQALAFAGLIWIVAT) traverse the membrane as a helical segment.

It belongs to the ATPase B chain family. F-type ATPases have 2 components, F(1) - the catalytic core - and F(0) - the membrane proton channel. F(1) has five subunits: alpha(3), beta(3), gamma(1), delta(1), epsilon(1). F(0) has three main subunits: a(1), b(2) and c(10-14). The alpha and beta chains form an alternating ring which encloses part of the gamma chain. F(1) is attached to F(0) by a central stalk formed by the gamma and epsilon chains, while a peripheral stalk is formed by the delta and b chains.

It is found in the cell inner membrane. Functionally, f(1)F(0) ATP synthase produces ATP from ADP in the presence of a proton or sodium gradient. F-type ATPases consist of two structural domains, F(1) containing the extramembraneous catalytic core and F(0) containing the membrane proton channel, linked together by a central stalk and a peripheral stalk. During catalysis, ATP synthesis in the catalytic domain of F(1) is coupled via a rotary mechanism of the central stalk subunits to proton translocation. In terms of biological role, component of the F(0) channel, it forms part of the peripheral stalk, linking F(1) to F(0). The polypeptide is ATP synthase subunit b (Xanthomonas axonopodis pv. citri (strain 306)).